The following is a 321-amino-acid chain: tRNA uridine(34) hydroxylase (321 aa).

Residues 135-233 (DDPDTLVIDT…YLEQVPEEES (99 aa)) form the Rhodanese domain. Residue Cys-193 is the Cysteine persulfide intermediate of the active site. A disordered region spans residues 301–321 (RQRQMDQLSSASSKKSDDFSL).

Belongs to the TrhO family.

The enzyme catalyses uridine(34) in tRNA + AH2 + O2 = 5-hydroxyuridine(34) in tRNA + A + H2O. In terms of biological role, catalyzes oxygen-dependent 5-hydroxyuridine (ho5U) modification at position 34 in tRNAs. The chain is tRNA uridine(34) hydroxylase from Parasynechococcus marenigrum (strain WH8102).